Reading from the N-terminus, the 473-residue chain is MTLFPIFADLTGRRVLVVGGGAVAVRKTQALLQAGAEVVVGAPRLDPALAALAEQGGIARLDGGFEPAWLAGAWLVVAATDDRAVNAAVSEAARARRVFCNVVDDAELSSFQVPSVVDRSPLIVAISSSGVAPVLARRLRERIESLFDHSLGQLAALAARYRPRIRAARPDLGQRRRFYDWLLDGPVAARLRQQQPGLAEQELEQALRAPQAAPRGSVVLVGAGPGDPGLLTLKALRALNEADIILYDRLVSEGVLALARRDAERVPVGKLPGKGHDATQARIHALMLAQARAGRRVVRLKGGDAFIFGRGGEELEYLRAHGVPYEVVPGITAALACAAYAGMPLTHRDHAQSVRMVTAHCRADQDTLDWAGLARDQQTLAFYMGVGQLDYVTARLLEHGRAPATPFALIENGSRPEQRVVTGTLADLPEIARRRGVRPPALLVIGEVAALADTLQWFGQHQRGLPGPQALAA.

The tract at residues 1–203 is precorrin-2 dehydrogenase /sirohydrochlorin ferrochelatase; sequence MTLFPIFADL…QQPGLAEQEL (203 aa). NAD(+) contacts are provided by residues 22 to 23 and 43 to 44; these read AV and PR. Ser-128 bears the Phosphoserine mark. The uroporphyrinogen-III C-methyltransferase stretch occupies residues 216–473; sequence GSVVLVGAGP…GLPGPQALAA (258 aa). Pro-225 is an S-adenosyl-L-methionine binding site. Asp-248 functions as the Proton acceptor in the catalytic mechanism. Catalysis depends on Lys-270, which acts as the Proton donor. Residues 302–304, Ile-307, 332–333, Met-384, and Gly-413 each bind S-adenosyl-L-methionine; these read GGD and TA.

In the N-terminal section; belongs to the precorrin-2 dehydrogenase / sirohydrochlorin ferrochelatase family. This sequence in the C-terminal section; belongs to the precorrin methyltransferase family.

It catalyses the reaction uroporphyrinogen III + 2 S-adenosyl-L-methionine = precorrin-2 + 2 S-adenosyl-L-homocysteine + H(+). The enzyme catalyses precorrin-2 + NAD(+) = sirohydrochlorin + NADH + 2 H(+). The catalysed reaction is siroheme + 2 H(+) = sirohydrochlorin + Fe(2+). The protein operates within cofactor biosynthesis; adenosylcobalamin biosynthesis; precorrin-2 from uroporphyrinogen III: step 1/1. It functions in the pathway cofactor biosynthesis; adenosylcobalamin biosynthesis; sirohydrochlorin from precorrin-2: step 1/1. It participates in porphyrin-containing compound metabolism; siroheme biosynthesis; precorrin-2 from uroporphyrinogen III: step 1/1. Its pathway is porphyrin-containing compound metabolism; siroheme biosynthesis; siroheme from sirohydrochlorin: step 1/1. The protein operates within porphyrin-containing compound metabolism; siroheme biosynthesis; sirohydrochlorin from precorrin-2: step 1/1. Its function is as follows. Multifunctional enzyme that catalyzes the SAM-dependent methylations of uroporphyrinogen III at position C-2 and C-7 to form precorrin-2 via precorrin-1. Then it catalyzes the NAD-dependent ring dehydrogenation of precorrin-2 to yield sirohydrochlorin. Finally, it catalyzes the ferrochelation of sirohydrochlorin to yield siroheme. This chain is Siroheme synthase, found in Bordetella pertussis (strain Tohama I / ATCC BAA-589 / NCTC 13251).